Consider the following 183-residue polypeptide: Inner membrane-spanning protein YciB (183 aa).

A run of 5 helical transmembrane segments spans residues 19–39, 53–73, 76–96, 121–141, and 151–171; these read LYGV…QLIV, IMGI…DLNF, WKVT…QFVF, LGWA…SYYF, and TFGF…YLYP.

The protein belongs to the YciB family.

It is found in the cell inner membrane. Plays a role in cell envelope biogenesis, maintenance of cell envelope integrity and membrane homeostasis. The sequence is that of Inner membrane-spanning protein YciB from Actinobacillus pleuropneumoniae serotype 5b (strain L20).